Consider the following 588-residue polypeptide: DNA ligase (588 aa).

Glu248 serves as a coordination point for ATP. The active-site N6-AMP-lysine intermediate is the Lys250. Residues Arg255, Arg270, Glu300, Phe341, Arg418, and Lys424 each contribute to the ATP site.

This sequence belongs to the ATP-dependent DNA ligase family. Requires Mg(2+) as cofactor.

The catalysed reaction is ATP + (deoxyribonucleotide)n-3'-hydroxyl + 5'-phospho-(deoxyribonucleotide)m = (deoxyribonucleotide)n+m + AMP + diphosphate.. Its function is as follows. DNA ligase that seals nicks in double-stranded DNA during DNA replication, DNA recombination and DNA repair. This chain is DNA ligase, found in Thermoplasma volcanium (strain ATCC 51530 / DSM 4299 / JCM 9571 / NBRC 15438 / GSS1).